The primary structure comprises 711 residues: Dixin (711 aa).

The N-myristoyl glycine moiety is linked to residue Leu2. Val13 is modified (phosphoserine). In terms of domain architecture, Calponin-homology (CH) spans 20-153; sequence EQQLQAYVAW…LVLALAAHFK (134 aa). Positions 153–326 are actin-binding; that stretch reads KPGSSRTVSQ…LEKEMEEAKK (174 aa). Ser212 carries the post-translational modification Phosphoserine. Disordered regions lie at residues 233–258, 271–298, and 584–623; these read GQQKSPSESSCSSLTSPSPIHSAKSE, VIIPSEGIENRTDEPDSPSSRDWRPGSR, and TQKKQERKVGGRSPRNQASSEYRASWPPNSTLPHSQSSPA. Over residues 237–254 the composition is skewed to low complexity; that stretch reads SPSESSCSSLTSPSPIHS. Phosphoserine is present on Ser257. Basic and acidic residues predominate over residues 278-295; the sequence is IENRTDEPDSPSSRDWRP. Residues 279-452 adopt a coiled-coil conformation; it reads ENRTDEPDSP…NRLLGEYKKE (174 aa). Positions 597–623 are enriched in polar residues; it reads PRNQASSEYRASWPPNSTLPHSQSSPA. One can recognise a DIX domain in the interval 600 to 680; the sequence is QASSEYRASW…HFKALDPEFG (81 aa). Ser618 is subject to Phosphoserine.

Belongs to the DIXDC1 family. As to quaternary structure, may bind filamentous actin. Directly interacts (via DIX domain) with DVL2 (via DIX domain). Interacts with gamma-tubulin. Interacts with the complex composed of DVL2 and Rac. Interacts with AXIN1; competes with MAP3K1. Interacts with MAP3K4 preventing MAP3K4 interaction with AXIN1. Post-translationally, phosphorylated on tyrosine and serine residues. Polyubiquitinated, leading to its proteasomal degradation. WNT3A signaling increases DIXDC1 protein levels by inhibiting its ubiquitination and subsequent degradation. Abundantly expressed in brain and testis and to a lower extent in lung, kidney, colon, ovary and urinary bladder. Expressed in brain, liver, testis and spleen (at protein level). Expressed throughout the brain with strong expression in main and accessory olfactory bulbs, cerebral cortex, piriform cortex, hippocampus, habenular nucleus, dorsal thalamus, superior and inferior colliculi and cerebellum.

It localises to the cell junction. The protein resides in the focal adhesion. The protein localises to the cytoplasm. It is found in the cytoskeleton. Its subcellular location is the stress fiber. Its function is as follows. Positive effector of the Wnt signaling pathway; activates WNT3A signaling via DVL2. Regulates JNK activation by AXIN1 and DVL2. This is Dixin (Dixdc1) from Mus musculus (Mouse).